Reading from the N-terminus, the 452-residue chain is Lamina-associated polypeptide 2, isoform beta (452 aa).

The interval 1–409 is nucleoplasmic; that stretch reads MPEFLEDPSV…KSEKTKKGRS (409 aa). Residues 5 to 48 enclose the LEM-like domain; sequence LEDPSVLTKDKLKSELVANNVTLPAGEQRKDVYVQLYLQHLTAR. 2 disordered regions span residues 48–113 and 149–264; these read RNRP…DVTE and REQG…VEPS. Residues 49 to 107 are linker; that stretch reads NRPPLAAGANSKGPPDFSSDEEREPTPVLGSGASVGRGRGAVGRKATKKTDKPRPEDKD. Phosphoserine is present on residues S66 and S67. Residue T74 is modified to Phosphothreonine. S82 carries the post-translational modification Phosphoserine. Omega-N-methylarginine occurs at positions 85 and 87. Residues 96–105 are compositionally biased toward basic and acidic residues; the sequence is KKTDKPRPED. The region spanning 108–152 is the LEM domain; the sequence is DLDVTELSNEELLEQLVRYGVNPGPIVGTTRKLYEKKLLKLREQG. Positions 137–242 are NAKAP95-binding N; it reads TRKLYEKKLL…TSGSSKGGPL (106 aa). Polar residues predominate over residues 154–177; the sequence is ESRSSTPLPTVSSSAENTRQNGSN. Residues S155 and S158 each carry the phosphoserine modification. Phosphothreonine is present on T159. Residues S165, S167, S176, S179, and S183 each carry the phosphoserine modification. Basic and acidic residues predominate over residues 178-202; sequence DSDRYSDNDEDSKIELKLEKREPLK. K206 is modified (N6-acetyllysine). The binds lamins B stretch occupies residues 298–370; the sequence is TGNFKHASSI…SCRRPIKGAA (73 aa). Positions 299–373 are NAKAP95-binding C; the sequence is GNFKHASSIL…RPIKGAAGRP (75 aa). S305, S306, and S361 each carry phosphoserine. K388 is subject to N6-acetyllysine. The chain crosses the membrane as a helical; Signal-anchor for type II membrane protein span at residues 410–430; it reads VPMWIKMLLFALVAGFLFLVY. Residues 431–452 are Lumenal-facing; it reads QAMETNQGNPFTNFLQDTKISN.

The protein belongs to the LEM family. As to quaternary structure, interacts with LMNB1, LMNB2, BANF1, AKAP8L, GMCL and chromosomes. In terms of processing, mitosis-specific phosphorylation specifically abolishes its binding to lamin B and chromosomes.

Its subcellular location is the nucleus inner membrane. It localises to the chromosome. Its function is as follows. Binds directly to lamin B1 and chromosomes in a mitotic phosphorylation-regulated manner. May play an important role in nuclear envelope reassembly at the end of mitosis and/or anchoring of the nuclear lamina and interphase chromosomes to the nuclear envelope. This Rattus norvegicus (Rat) protein is Lamina-associated polypeptide 2, isoform beta (Tmpo).